Reading from the N-terminus, the 741-residue chain is Transketolase, chloroplastic (741 aa).

The N-terminal 67 residues, 1 to 67 (MASSSSLTLS…TKQQFSVRAS (67 aa)), are a transit peptide targeting the chloroplast. Histidine 103 provides a ligand contact to substrate. Residues histidine 143 and 192–194 (GPL) contribute to the thiamine diphosphate site. Residue aspartate 233 coordinates Mg(2+). The thiamine diphosphate site is built by glycine 234 and asparagine 263. Mg(2+) is bound by residues asparagine 263 and isoleucine 265. Substrate-binding residues include histidine 340, arginine 434, and serine 461. A thiamine diphosphate-binding site is contributed by histidine 340. Residues glutamate 488 and phenylalanine 515 each contribute to the thiamine diphosphate site. Glutamate 488 (proton donor) is an active-site residue. Substrate-binding residues include histidine 539, aspartate 547, and arginine 598.

It belongs to the transketolase family. As to quaternary structure, homodimer. It depends on Mg(2+) as a cofactor. Requires Ca(2+) as cofactor. Mn(2+) is required as a cofactor. Co(2+) serves as cofactor. The cofactor is thiamine diphosphate.

It is found in the plastid. The protein localises to the chloroplast thylakoid membrane. It carries out the reaction D-sedoheptulose 7-phosphate + D-glyceraldehyde 3-phosphate = aldehydo-D-ribose 5-phosphate + D-xylulose 5-phosphate. It participates in carbohydrate biosynthesis; Calvin cycle. In terms of biological role, catalyzes the reversible transfer of a two-carbon ketol group from fructose-6-phosphate or sedoheptulose-7-phosphate to glyceraldehyde-3-phosphate to yield xylulose-5-phosphate and erythrose-4-phosphate or ribose-5-phosphate, respectively. The chain is Transketolase, chloroplastic from Solanum tuberosum (Potato).